The sequence spans 615 residues: Chromosomal replication initiator protein DnaA (615 aa).

The segment at 1–88 (MSEGQINLAM…RVAVTVDPSA (88 aa)) is domain I, interacts with DnaA modulators. The tract at residues 85–272 (DPSAVPPSAP…PTSGGPDQLN (188 aa)) is disordered. A domain II region spans residues 88-269 (AVPPSAPTEE…STNPTSGGPD (182 aa)). 2 stretches are compositionally biased toward low complexity: residues 94 to 112 (PTEEASSTSSPDSSHPAPD) and 173 to 190 (PSSADPGSPASPAPVAES). The interval 270–486 (QLNPKYTFDT…GALIRVTAFA (217 aa)) is domain III, AAA+ region. Residues glycine 314, glycine 316, lysine 317, and threonine 318 each contribute to the ATP site. The tract at residues 487-615 (SLNRQSVDLH…QQAHHNHHHL (129 aa)) is domain IV, binds dsDNA.

Belongs to the DnaA family. In terms of assembly, oligomerizes as a right-handed, spiral filament on DNA at oriC.

The protein localises to the cytoplasm. Plays an essential role in the initiation and regulation of chromosomal replication. ATP-DnaA binds to the origin of replication (oriC) to initiate formation of the DNA replication initiation complex once per cell cycle. Binds the DnaA box (a 9 base pair repeat at the origin) and separates the double-stranded (ds)DNA. Forms a right-handed helical filament on oriC DNA; dsDNA binds to the exterior of the filament while single-stranded (ss)DNA is stabiized in the filament's interior. The ATP-DnaA-oriC complex binds and stabilizes one strand of the AT-rich DNA unwinding element (DUE), permitting loading of DNA polymerase. After initiation quickly degrades to an ADP-DnaA complex that is not apt for DNA replication. Binds acidic phospholipids. This is Chromosomal replication initiator protein DnaA from Thermobifida fusca (strain YX).